An 805-amino-acid polypeptide reads, in one-letter code: Ubiquitin carboxyl-terminal hydrolase 10-B (805 aa).

Disordered regions lie at residues 136 to 173 and 284 to 305; these read AIPD…YLEG and DTTE…EDTV. Polar residues-rich tracts occupy residues 143 to 153 and 284 to 298; these read NADSDGTSGTG and DTTE…QTLE. The 381-residue stretch at 422–802 folds into the USP domain; the sequence is RGLINKGNWC…TAYLLYYRRV (381 aa). The active-site Nucleophile is cysteine 431. Residues 573-600 are disordered; it reads EEVNKEEQEGSDEEWEQVGPRNKSSVTR. The active-site Proton acceptor is the histidine 756.

The protein belongs to the peptidase C19 family. USP10 subfamily.

The protein resides in the cytoplasm. The protein localises to the nucleus. It catalyses the reaction Thiol-dependent hydrolysis of ester, thioester, amide, peptide and isopeptide bonds formed by the C-terminal Gly of ubiquitin (a 76-residue protein attached to proteins as an intracellular targeting signal).. Hydrolase that can remove conjugated ubiquitin from target proteins such as p53/tp53, rps2/us5, rps3/us3, rps10/eS10, becn1, snx3 and cftr. Acts as an essential regulator of p53/tp53 stability: in unstressed cells, specifically deubiquitinates p53/tp53 in the cytoplasm, leading to counteracts MDM2 action and stabilize p53/tp53. Following DNA damage, translocates to the nucleus and deubiquitinates p53/tp53, leading to regulate the p53/TP53-dependent DNA damage response. Component of a regulatory loop that controls autophagy and p53/tp53 levels. Plays a key role in 40S ribosome subunit recycling when a ribosome has stalled during translation: acts both by inhibiting formation of stress granules, which store stalled translation pre-initiation complexes, and mediating deubiquitination of 40S ribosome subunits. Deubiquitinates cftr in early endosomes, enhancing its endocytic recycling. This Xenopus laevis (African clawed frog) protein is Ubiquitin carboxyl-terminal hydrolase 10-B (usp10-b).